Consider the following 338-residue polypeptide: Solute carrier family 35 member G4 (338 aa).

The interval 1 to 29 (MAGSHPYFNLPDSTHPSPPSTPPSLHWHQ) is disordered. 7 helical membrane-spanning segments follow: residues 37-57 (TNGLLVALLGGGLPAGFVGPL), 160-180 (CGLLGSILGLIIIVGPGLWTL), 190-210 (GLGYVQAFLGGLALSLGLLVY), 221-241 (TVAFLSGLVGLLGSVPGLFVL), 250-270 (LLSWSCVGAVGILTLVSFTCV), 281-301 (LVCAVLHSEVVMALILQYFML), and 305-325 (VAPSDIMGAGVVLGSIAIITA). Residues 49–174 (LPAGFVGPLS…SILGLIIIVG (126 aa)) form the EamA 1 domain. The EamA 2 domain maps to 272 to 325 (YAVTKAHPALVCAVLHSEVVMALILQYFMLHETVAPSDIMGAGVVLGSIAIITA).

This sequence belongs to the SLC35G solute transporter family.

It localises to the membrane. This is Solute carrier family 35 member G4 (SLC35G4) from Homo sapiens (Human).